The chain runs to 113 residues: Non-specific lipid-transfer protein 6 (113 aa).

An N-terminal signal peptide occupies residues 1-19 (MRSLLLAVCLVLALHCGEA). 4 disulfide bridges follow: Cys-23–Cys-70, Cys-33–Cys-47, Cys-48–Cys-95, and Cys-68–Cys-109.

The protein belongs to the plant LTP family.

Its function is as follows. Plant non-specific lipid-transfer proteins transfer phospholipids as well as galactolipids across membranes. May play a role in wax or cutin deposition in the cell walls of expanding epidermal cells and certain secretory tissues. The protein is Non-specific lipid-transfer protein 6 (LTP6) of Arabidopsis thaliana (Mouse-ear cress).